The chain runs to 477 residues: Bifunctional protein HldE (477 aa).

The segment at 1–318 is ribokinase; sequence MKVTLPEFER…ENAVRGRADT (318 aa). Lys179 bears the N6-acetyllysine mark. An ATP-binding site is contributed by 195 to 198; the sequence is NLSE. Asp264 is a catalytic residue. A cytidylyltransferase region spans residues 344–477; that stretch reads MTNGVFDILH…IKKIQQDKKG (134 aa).

It in the N-terminal section; belongs to the carbohydrate kinase PfkB family. In the C-terminal section; belongs to the cytidylyltransferase family. As to quaternary structure, homodimer.

The enzyme catalyses D-glycero-beta-D-manno-heptose 7-phosphate + ATP = D-glycero-beta-D-manno-heptose 1,7-bisphosphate + ADP + H(+). It carries out the reaction D-glycero-beta-D-manno-heptose 1-phosphate + ATP + H(+) = ADP-D-glycero-beta-D-manno-heptose + diphosphate. Its pathway is nucleotide-sugar biosynthesis; ADP-L-glycero-beta-D-manno-heptose biosynthesis; ADP-L-glycero-beta-D-manno-heptose from D-glycero-beta-D-manno-heptose 7-phosphate: step 1/4. The protein operates within nucleotide-sugar biosynthesis; ADP-L-glycero-beta-D-manno-heptose biosynthesis; ADP-L-glycero-beta-D-manno-heptose from D-glycero-beta-D-manno-heptose 7-phosphate: step 3/4. Its function is as follows. Catalyzes the phosphorylation of D-glycero-D-manno-heptose 7-phosphate at the C-1 position to selectively form D-glycero-beta-D-manno-heptose-1,7-bisphosphate. In terms of biological role, catalyzes the ADP transfer from ATP to D-glycero-beta-D-manno-heptose 1-phosphate, yielding ADP-D-glycero-beta-D-manno-heptose. In Escherichia coli O9:H4 (strain HS), this protein is Bifunctional protein HldE.